Reading from the N-terminus, the 249-residue chain is MRRFKCTIQYDGTDYSGYQVQPNGLTIQEVLEKTLGRMHKHPVKVIGSGRTDARVHAQGQVIHFDTELSIAPASMVKALNTLLPDDIRVRDCKEVASDFEARYDVVGKEYRYFVRRTENAFRRHQSVLIPYSLDVAQIRLGLAHLVGTHDFSSFCVAKTETDNRVRTIYEAELIEQGEELIFRFQGSGFLYNQIRIMVGTLLDVGRGRFAPDDIKRMLEAKDRNVAGVTAPPHGLYLWEVFYPESKKGI.

The active-site Nucleophile is Asp52. Substrate is bound at residue Tyr110.

The protein belongs to the tRNA pseudouridine synthase TruA family. In terms of assembly, homodimer.

The catalysed reaction is uridine(38/39/40) in tRNA = pseudouridine(38/39/40) in tRNA. Its function is as follows. Formation of pseudouridine at positions 38, 39 and 40 in the anticodon stem and loop of transfer RNAs. This Exiguobacterium sibiricum (strain DSM 17290 / CCUG 55495 / CIP 109462 / JCM 13490 / 255-15) protein is tRNA pseudouridine synthase A.